Consider the following 119-residue polypeptide: MSIRTEKVASLLQQELGAILEKELPRSSALSTVVDVKVTADLGIARIYVSVIGTEEQRTAIMAWLHDETKYLRKLLSAKIRHHFRRIPEIEFFEDRIYERASRIEQLLREVRKAPEQHD.

This sequence belongs to the RbfA family. In terms of assembly, monomer. Binds 30S ribosomal subunits, but not 50S ribosomal subunits or 70S ribosomes.

The protein resides in the cytoplasm. In terms of biological role, one of several proteins that assist in the late maturation steps of the functional core of the 30S ribosomal subunit. Associates with free 30S ribosomal subunits (but not with 30S subunits that are part of 70S ribosomes or polysomes). Required for efficient processing of 16S rRNA. May interact with the 5'-terminal helix region of 16S rRNA. This chain is Ribosome-binding factor A, found in Chlorobium limicola (strain DSM 245 / NBRC 103803 / 6330).